A 334-amino-acid polypeptide reads, in one-letter code: UDP-N-acetylglucosamine--N-acetylmuramyl-(pentapeptide) pyrophosphoryl-undecaprenol N-acetylglucosamine transferase (334 aa).

UDP-N-acetyl-alpha-D-glucosamine-binding positions include 11-13 (TGG), asparagine 125, serine 185, isoleucine 229, and glutamine 274.

Belongs to the glycosyltransferase 28 family. MurG subfamily.

The protein localises to the cell inner membrane. It catalyses the reaction di-trans,octa-cis-undecaprenyl diphospho-N-acetyl-alpha-D-muramoyl-L-alanyl-D-glutamyl-meso-2,6-diaminopimeloyl-D-alanyl-D-alanine + UDP-N-acetyl-alpha-D-glucosamine = di-trans,octa-cis-undecaprenyl diphospho-[N-acetyl-alpha-D-glucosaminyl-(1-&gt;4)]-N-acetyl-alpha-D-muramoyl-L-alanyl-D-glutamyl-meso-2,6-diaminopimeloyl-D-alanyl-D-alanine + UDP + H(+). The protein operates within cell wall biogenesis; peptidoglycan biosynthesis. In terms of biological role, cell wall formation. Catalyzes the transfer of a GlcNAc subunit on undecaprenyl-pyrophosphoryl-MurNAc-pentapeptide (lipid intermediate I) to form undecaprenyl-pyrophosphoryl-MurNAc-(pentapeptide)GlcNAc (lipid intermediate II). The sequence is that of UDP-N-acetylglucosamine--N-acetylmuramyl-(pentapeptide) pyrophosphoryl-undecaprenol N-acetylglucosamine transferase from Thermosipho africanus (strain TCF52B).